A 387-amino-acid chain; its full sequence is Probable multidrug resistance protein EmrK (387 aa).

Residues 1 to 16 are Cytoplasmic-facing; sequence MEQINSNKKHSNRRKY. The helical transmembrane segment at 17–37 threads the bilayer; that stretch reads FSLLAVVLFIAFSGAYAYWSM. At 38-387 the chain is on the periplasmic side; it reads ELEDMISTDD…SNIISHNGQL (350 aa).

Belongs to the membrane fusion protein (MFP) (TC 8.A.1) family. In terms of assembly, part of the tripartite efflux system EmrYK-TolC, which is composed of an inner membrane transporter, EmrY, a membrane fusion protein, EmrK, and an outer membrane component, TolC. The complex forms a large protein conduit and can translocate molecules across both the inner and outer membranes.

It localises to the cell inner membrane. Functionally, part of the tripartite efflux system EmrYK-TolC, which confers resistance to various drugs. The sequence is that of Probable multidrug resistance protein EmrK (emrK) from Escherichia coli (strain K12).